A 70-amino-acid chain; its full sequence is Putative membrane protein insertion efficiency factor (70 aa).

The protein belongs to the UPF0161 family.

The protein resides in the cell inner membrane. Could be involved in insertion of integral membrane proteins into the membrane. This chain is Putative membrane protein insertion efficiency factor, found in Francisella tularensis subsp. tularensis (strain SCHU S4 / Schu 4).